A 196-amino-acid chain; its full sequence is Cell division protein SepF (196 aa).

The tract at residues 16 to 81 (EDDEEFNEPA…KRAGSTFTKP (66 aa)) is disordered. The span at 56–69 (RPAQSTSKAQTQTA) shows a compositional bias: polar residues.

This sequence belongs to the SepF family. In terms of assembly, homodimer. Interacts with FtsZ.

It is found in the cytoplasm. Its function is as follows. Cell division protein that is part of the divisome complex and is recruited early to the Z-ring. Probably stimulates Z-ring formation, perhaps through the cross-linking of FtsZ protofilaments. Its function overlaps with FtsA. This is Cell division protein SepF from Lactococcus lactis subsp. lactis (strain IL1403) (Streptococcus lactis).